A 66-amino-acid chain; its full sequence is Cysteine proteinase inhibitor (66 aa).

A Secondary area of contact motif is present at residues 18-22; it reads QVVAG.

The protein belongs to the cystatin family. Phytocystatin subfamily. In tubers of untreated plants. After ABA treatment or mechanical wounding is mostly accumulated in leaves, to a lesser extent in stems, but not in roots.

The protein is Cysteine proteinase inhibitor (CYS-PIN) of Solanum tuberosum (Potato).